The primary structure comprises 391 residues: Protein kinase ORF14 (391 aa).

The Protein kinase domain occupies 109 to 391; sequence VPLRHTRGNI…ETLVDEFSKI (283 aa). Lys-134 is a binding site for ATP. Residue Asp-235 is the Proton acceptor of the active site.

The protein belongs to the protein kinase superfamily. Ser/Thr protein kinase family.

The catalysed reaction is L-seryl-[protein] + ATP = O-phospho-L-seryl-[protein] + ADP + H(+). The enzyme catalyses L-threonyl-[protein] + ATP = O-phospho-L-threonyl-[protein] + ADP + H(+). In Ictalurid herpesvirus 1 (strain Auburn) (IcHV-1), this protein is Protein kinase ORF14 (ORF14).